Reading from the N-terminus, the 400-residue chain is Nicotinate phosphoribosyltransferase (400 aa).

His220 carries the post-translational modification Phosphohistidine; by autocatalysis.

It belongs to the NAPRTase family. Transiently phosphorylated on a His residue during the reaction cycle. Phosphorylation strongly increases the affinity for substrates and increases the rate of nicotinate D-ribonucleotide production. Dephosphorylation regenerates the low-affinity form of the enzyme, leading to product release.

The enzyme catalyses nicotinate + 5-phospho-alpha-D-ribose 1-diphosphate + ATP + H2O = nicotinate beta-D-ribonucleotide + ADP + phosphate + diphosphate. It participates in cofactor biosynthesis; NAD(+) biosynthesis; nicotinate D-ribonucleotide from nicotinate: step 1/1. In terms of biological role, catalyzes the synthesis of beta-nicotinate D-ribonucleotide from nicotinate and 5-phospho-D-ribose 1-phosphate at the expense of ATP. In Salmonella heidelberg (strain SL476), this protein is Nicotinate phosphoribosyltransferase.